Reading from the N-terminus, the 244-residue chain is 1-(5-phosphoribosyl)-5-[(5-phosphoribosylamino)methylideneamino] imidazole-4-carboxamide isomerase (244 aa).

Asp-8 serves as the catalytic Proton acceptor. Asp-129 (proton donor) is an active-site residue.

It belongs to the HisA/HisF family.

It is found in the cytoplasm. It catalyses the reaction 1-(5-phospho-beta-D-ribosyl)-5-[(5-phospho-beta-D-ribosylamino)methylideneamino]imidazole-4-carboxamide = 5-[(5-phospho-1-deoxy-D-ribulos-1-ylimino)methylamino]-1-(5-phospho-beta-D-ribosyl)imidazole-4-carboxamide. The protein operates within amino-acid biosynthesis; L-histidine biosynthesis; L-histidine from 5-phospho-alpha-D-ribose 1-diphosphate: step 4/9. In Maricaulis maris (strain MCS10) (Caulobacter maris), this protein is 1-(5-phosphoribosyl)-5-[(5-phosphoribosylamino)methylideneamino] imidazole-4-carboxamide isomerase.